The chain runs to 399 residues: Stage III sporulation protein AE (399 aa).

Positions 1–24 (MKRFQWVLLLAVLIIAGRAEIVQA) are cleaved as a signal peptide. Helical transmembrane passes span 104–124 (VLAN…CVIL), 140–160 (AYSI…HVAI), 172–192 (SFIL…GGAV), 209–229 (GLLI…LSIV), 248–268 (IAIG…SVQG), 315–335 (VGIL…IKVL), and 368–388 (IYIF…LTVI).

As to quaternary structure, interacts with SpoIIIJ and YqjG.

It is found in the cell membrane. Its function is as follows. Required during sporulation for activation of sigma factor SpoIIIG/SigG after engulfment is completed in the prespore. Overexpression in the absence of SpoIIIJ is synthetically lethal. In Bacillus subtilis (strain 168), this protein is Stage III sporulation protein AE (spoIIIAE).